Reading from the N-terminus, the 219-residue chain is Cytochrome b6 (219 aa).

Residues 32-52 form a helical membrane-spanning segment; that stretch reads IFYCFGGIVLTCFIIQAATGF. Cysteine 35 lines the heme c pocket. Positions 86 and 100 each coordinate heme b. Helical transmembrane passes span 90-110, 116-136, and 190-210; these read SGLM…TAGF, LTWI…VTGY, and AHTF…FLMI. Heme b is bound by residues histidine 191 and histidine 206.

It belongs to the cytochrome b family. PetB subfamily. The 4 large subunits of the cytochrome b6-f complex are cytochrome b6, subunit IV (17 kDa polypeptide, PetD), cytochrome f and the Rieske protein, while the 4 small subunits are PetG, PetL, PetM and PetN. The complex functions as a dimer. Requires heme b as cofactor. The cofactor is heme c.

It localises to the plastid. The protein resides in the chloroplast thylakoid membrane. Its function is as follows. Component of the cytochrome b6-f complex, which mediates electron transfer between photosystem II (PSII) and photosystem I (PSI), cyclic electron flow around PSI, and state transitions. The sequence is that of Cytochrome b6 from Amphidinium operculatum (Dinoflagellate).